Here is a 353-residue protein sequence, read N- to C-terminus: tRNA U34 carboxymethyltransferase (353 aa).

Carboxy-S-adenosyl-L-methionine-binding positions include Lys101, Trp119, Lys124, Gly144, 166 to 168 (DPS), 207 to 208 (LE), Met227, Tyr231, and Arg346.

Belongs to the class I-like SAM-binding methyltransferase superfamily. CmoB family. As to quaternary structure, homotetramer.

It carries out the reaction carboxy-S-adenosyl-L-methionine + 5-hydroxyuridine(34) in tRNA = 5-carboxymethoxyuridine(34) in tRNA + S-adenosyl-L-homocysteine + H(+). Catalyzes carboxymethyl transfer from carboxy-S-adenosyl-L-methionine (Cx-SAM) to 5-hydroxyuridine (ho5U) to form 5-carboxymethoxyuridine (cmo5U) at position 34 in tRNAs. The chain is tRNA U34 carboxymethyltransferase from Psychrobacter sp. (strain PRwf-1).